Here is a 227-residue protein sequence, read N- to C-terminus: MTNNLSGYRNKIVRVKTAKKRPISSSNWLRRQLNDPYVAKARLEGFRSRAAYKLLEIHDKFRLFTPNMKIVDLGAAPGGWSQVASKLIKASDNNLNNKIISIDLLKIEPIVGVEFLQKDFFEKDTEELIIHGLDGKADLVMSDMASNTIGHKATDHIRTLLLCEQAFEFALKVLKPSCHFIAKIFRGGAETALLNKVKREFRTVKHFKPVSSRSESTEIYLVALNKK.

S-adenosyl-L-methionine contacts are provided by Gly78, Trp80, Asp103, Asp119, and Asp143. Catalysis depends on Lys183, which acts as the Proton acceptor.

Belongs to the class I-like SAM-binding methyltransferase superfamily. RNA methyltransferase RlmE family.

It is found in the cytoplasm. It catalyses the reaction uridine(2552) in 23S rRNA + S-adenosyl-L-methionine = 2'-O-methyluridine(2552) in 23S rRNA + S-adenosyl-L-homocysteine + H(+). Functionally, specifically methylates the uridine in position 2552 of 23S rRNA at the 2'-O position of the ribose in the fully assembled 50S ribosomal subunit. The chain is Ribosomal RNA large subunit methyltransferase E from Rickettsia typhi (strain ATCC VR-144 / Wilmington).